The primary structure comprises 814 residues: Glycogen phosphorylase (814 aa).

Lys662 is modified (N6-(pyridoxal phosphate)lysine).

Belongs to the glycogen phosphorylase family. Pyridoxal 5'-phosphate is required as a cofactor.

It catalyses the reaction [(1-&gt;4)-alpha-D-glucosyl](n) + phosphate = [(1-&gt;4)-alpha-D-glucosyl](n-1) + alpha-D-glucose 1-phosphate. In terms of biological role, phosphorylase is an important allosteric enzyme in carbohydrate metabolism. Enzymes from different sources differ in their regulatory mechanisms and in their natural substrates. However, all known phosphorylases share catalytic and structural properties. This is Glycogen phosphorylase (glgP) from Chlamydia trachomatis serovar D (strain ATCC VR-885 / DSM 19411 / UW-3/Cx).